Reading from the N-terminus, the 266-residue chain is Gap junction beta-4 protein (266 aa).

An intramembrane segment occupies 2–13 (NWGFLQGILSGV). The Cytoplasmic portion of the chain corresponds to 14 to 20 (NKYSTAL). The helical transmembrane segment at 21–40 (GRIWLSVVFIFRVLVYVVAA) threads the bilayer. Over 41–73 (EEVWDDDQKDFICNTKQPGCPNVCYDEFFPVSH) the chain is Extracellular. Cystine bridges form between Cys-53–Cys-175, Cys-60–Cys-169, and Cys-64–Cys-164. The helical transmembrane segment at 74–94 (VRLWALQLILVTCPSLLVVMH) threads the bilayer. Residues 95-130 (VAYREERERKHRLKHGPNAPALYSNLSKKRGGLWWT) are Cytoplasmic-facing. Residues 131–151 (YLLSLIFKAAVDSGFLYIFHC) form a helical membrane-spanning segment. At 152–184 (IYKDYDMPRVVACSVTPCPHTVDCYIARPTEKK) the chain is on the extracellular side. A helical membrane pass occupies residues 185 to 205 (VFTYFMVVTAAICILLNLSEV). Topologically, residues 206–266 (VYLVGKRCME…MATVDAGVYP (61 aa)) are cytoplasmic.

It belongs to the connexin family. Beta-type (group I) subfamily. A hemichannel or connexon is composed of a hexamer of connexins. A functional gap junction is formed by the apposition of two hemichannels. Forms heteromeric channels with GJB2. In terms of tissue distribution, detected in cochlea (at protein level). Detected in cochlea. Expressed in skin.

The protein resides in the cell membrane. Its subcellular location is the cell junction. The protein localises to the gap junction. Structural component of gap junctions. Gap junctions are dodecameric channels that connect the cytoplasm of adjoining cells. They are formed by the docking of two hexameric hemichannels, one from each cell membrane. Small molecules and ions diffuse from one cell to a neighboring cell via the central pore. This chain is Gap junction beta-4 protein (Gjb4), found in Mus musculus (Mouse).